A 248-amino-acid polypeptide reads, in one-letter code: Isoamyl acetate-hydrolyzing esterase 1 homolog (248 aa).

Serine 24 acts as the Nucleophile in catalysis. Lysine 63 carries the post-translational modification N6-succinyllysine. Aspartate 196 acts as the Proton donor in catalysis. Histidine 199 functions as the Proton acceptor in the catalytic mechanism.

The protein belongs to the 'GDSL' lipolytic enzyme family. IAH1 subfamily.

Probable lipase. The chain is Isoamyl acetate-hydrolyzing esterase 1 homolog (IAH1) from Homo sapiens (Human).